The chain runs to 717 residues: Polyribonucleotide nucleotidyltransferase (717 aa).

Mg(2+) contacts are provided by aspartate 496 and aspartate 502. Residues 563–622 (PRLLTIKIDPDLIGLVIGPGGKTVKGITEQTGTKIDIDDDGTVTISSTDGEQAEKAKRLI) enclose the KH domain. One can recognise an S1 motif domain in the interval 632–700 (GEVYLGRVTR…SKGRLNLTRL (69 aa)).

The protein belongs to the polyribonucleotide nucleotidyltransferase family. Mg(2+) is required as a cofactor.

The protein localises to the cytoplasm. It catalyses the reaction RNA(n+1) + phosphate = RNA(n) + a ribonucleoside 5'-diphosphate. Functionally, involved in mRNA degradation. Catalyzes the phosphorolysis of single-stranded polyribonucleotides processively in the 3'- to 5'-direction. This Microcystis aeruginosa (strain NIES-843 / IAM M-2473) protein is Polyribonucleotide nucleotidyltransferase.